Reading from the N-terminus, the 137-residue chain is Small ribosomal subunit protein uS9c (137 aa).

The protein belongs to the universal ribosomal protein uS9 family.

It is found in the plastid. The protein localises to the chloroplast. The sequence is that of Small ribosomal subunit protein uS9c (rps9) from Chlorella vulgaris (Green alga).